A 463-amino-acid chain; its full sequence is Asparagine--tRNA ligase (463 aa).

The protein belongs to the class-II aminoacyl-tRNA synthetase family. As to quaternary structure, homodimer.

Its subcellular location is the cytoplasm. It catalyses the reaction tRNA(Asn) + L-asparagine + ATP = L-asparaginyl-tRNA(Asn) + AMP + diphosphate + H(+). The protein is Asparagine--tRNA ligase of Acholeplasma laidlawii (strain PG-8A).